A 351-amino-acid polypeptide reads, in one-letter code: MLKNDLFLRALKRQPCSRTPIWVMRQAGRYLPEYRAVREKTDFLTLCKTPELAAEVTIQPVDLMGVDAAIIFSDILVVNEAMGMDVEIIESKGIRLSPAIRSQVDIDRLIIPDINEKLGYVMDAIRLTKKELDNRVPLIGFSGAAWTLFTYAVEGGGSKNYAFAKKMMYREPKMAHMLLSKISSVITEYVLMQIEAGADAIQIFDSWASALSEDDYREFALPYIKENVQAIKTKYPDTPVIVFSKDCNTILSEIADTGCDAMGLGWNMDIAKARKELNDRVCIQGNMDPTVLYGTPDKIRSEAAKILKQFGQHTATSGHVFNLGHGILPDVDPANLKLLVEFVKEESVKYH.

Substrate contacts are provided by residues 25 to 29 (RQAGR), Asp-74, Tyr-151, Ser-206, and His-325.

This sequence belongs to the uroporphyrinogen decarboxylase family. As to quaternary structure, homodimer.

The protein resides in the cytoplasm. The catalysed reaction is uroporphyrinogen III + 4 H(+) = coproporphyrinogen III + 4 CO2. It functions in the pathway porphyrin-containing compound metabolism; protoporphyrin-IX biosynthesis; coproporphyrinogen-III from 5-aminolevulinate: step 4/4. Its function is as follows. Catalyzes the decarboxylation of four acetate groups of uroporphyrinogen-III to yield coproporphyrinogen-III. The chain is Uroporphyrinogen decarboxylase from Chlorobium phaeobacteroides (strain DSM 266 / SMG 266 / 2430).